The sequence spans 344 residues: 4-hydroxy-3-methylbut-2-en-1-yl diphosphate synthase (flavodoxin) (344 aa).

Residues Cys253, Cys256, Cys288, and Glu295 each coordinate [4Fe-4S] cluster.

The protein belongs to the IspG family. It depends on [4Fe-4S] cluster as a cofactor.

It carries out the reaction (2E)-4-hydroxy-3-methylbut-2-enyl diphosphate + oxidized [flavodoxin] + H2O + 2 H(+) = 2-C-methyl-D-erythritol 2,4-cyclic diphosphate + reduced [flavodoxin]. Its pathway is isoprenoid biosynthesis; isopentenyl diphosphate biosynthesis via DXP pathway; isopentenyl diphosphate from 1-deoxy-D-xylulose 5-phosphate: step 5/6. In terms of biological role, converts 2C-methyl-D-erythritol 2,4-cyclodiphosphate (ME-2,4cPP) into 1-hydroxy-2-methyl-2-(E)-butenyl 4-diphosphate. This is 4-hydroxy-3-methylbut-2-en-1-yl diphosphate synthase (flavodoxin) from Thermotoga maritima (strain ATCC 43589 / DSM 3109 / JCM 10099 / NBRC 100826 / MSB8).